Consider the following 132-residue polypeptide: Riboflavin kinase (132 aa).

13-18 (GLGHGS) contacts CDP. Mg(2+)-binding residues include Thr-40 and Asn-42. FMN contacts are provided by Thr-98 and Glu-106. CDP is bound at residue 111-114 (VYLR).

Belongs to the archaeal riboflavin kinase family. Mg(2+) is required as a cofactor.

It carries out the reaction riboflavin + CTP = CDP + FMN + H(+). Its pathway is cofactor biosynthesis; FMN biosynthesis; FMN from riboflavin (CTP route): step 1/1. Functionally, catalyzes the CTP-dependent phosphorylation of riboflavin (vitamin B2) to form flavin mononucleotide (FMN). This Aeropyrum pernix (strain ATCC 700893 / DSM 11879 / JCM 9820 / NBRC 100138 / K1) protein is Riboflavin kinase.